Reading from the N-terminus, the 280-residue chain is Polyamine aminopropyltransferase (280 aa).

The PABS domain occupies 2–235 (GGWIDEEHRG…GWWSWTFAAV (234 aa)). Residue glutamine 29 coordinates S-methyl-5'-thioadenosine. Spermidine contacts are provided by histidine 60 and aspartate 84. S-methyl-5'-thioadenosine-binding positions include glutamate 104 and 136–137 (DG). The active-site Proton acceptor is the aspartate 155. Proline 162 contacts S-methyl-5'-thioadenosine.

The protein belongs to the spermidine/spermine synthase family. Homodimer or homotetramer.

It localises to the cytoplasm. The catalysed reaction is S-adenosyl 3-(methylsulfanyl)propylamine + putrescine = S-methyl-5'-thioadenosine + spermidine + H(+). The protein operates within amine and polyamine biosynthesis; spermidine biosynthesis; spermidine from putrescine: step 1/1. Catalyzes the irreversible transfer of a propylamine group from the amino donor S-adenosylmethioninamine (decarboxy-AdoMet) to putrescine (1,4-diaminobutane) to yield spermidine. The polypeptide is Polyamine aminopropyltransferase (Parasynechococcus marenigrum (strain WH8102)).